The sequence spans 98 residues: Large ribosomal subunit protein eL14 (98 aa).

This sequence belongs to the eukaryotic ribosomal protein eL14 family.

The protein is Large ribosomal subunit protein eL14 of Hyperthermus butylicus (strain DSM 5456 / JCM 9403 / PLM1-5).